The primary structure comprises 274 residues: Rhamnulose-1-phosphate aldolase (274 aa).

E117 is an active-site residue. Residues H141, H143, and H212 each contribute to the Zn(2+) site.

This sequence belongs to the aldolase class II family. RhaD subfamily. As to quaternary structure, homotetramer. The cofactor is Zn(2+).

The protein resides in the cytoplasm. It catalyses the reaction L-rhamnulose 1-phosphate = (S)-lactaldehyde + dihydroxyacetone phosphate. Its pathway is carbohydrate degradation; L-rhamnose degradation; glycerone phosphate from L-rhamnose: step 3/3. Functionally, catalyzes the reversible cleavage of L-rhamnulose-1-phosphate to dihydroxyacetone phosphate (DHAP) and L-lactaldehyde. The polypeptide is Rhamnulose-1-phosphate aldolase (Escherichia coli (strain SE11)).